The primary structure comprises 452 residues: Bifunctional protein GlmU (452 aa).

The interval 1-226 (MSLDIVILAA…AMEVQGANDR (226 aa)) is pyrophosphorylase. Residues 8–11 (LAAG), lysine 22, glutamine 73, 78–79 (GT), 99–101 (YGD), glycine 136, glutamate 151, asparagine 166, and asparagine 224 each bind UDP-N-acetyl-alpha-D-glucosamine. Aspartate 101 contributes to the Mg(2+) binding site. Asparagine 224 lines the Mg(2+) pocket. The interval 227–247 (IQLAELERHYQLRAARRLMAQ) is linker. The interval 248–452 (GVTLRDPARF…IDGWQRPTKK (205 aa)) is N-acetyltransferase. The UDP-N-acetyl-alpha-D-glucosamine site is built by arginine 330 and lysine 348. Histidine 360 serves as the catalytic Proton acceptor. Positions 363 and 374 each coordinate UDP-N-acetyl-alpha-D-glucosamine. Residues alanine 377, 383–384 (NY), serine 402, alanine 420, and arginine 437 each bind acetyl-CoA.

The protein in the N-terminal section; belongs to the N-acetylglucosamine-1-phosphate uridyltransferase family. It in the C-terminal section; belongs to the transferase hexapeptide repeat family. As to quaternary structure, homotrimer. Requires Mg(2+) as cofactor.

It localises to the cytoplasm. It catalyses the reaction alpha-D-glucosamine 1-phosphate + acetyl-CoA = N-acetyl-alpha-D-glucosamine 1-phosphate + CoA + H(+). The catalysed reaction is N-acetyl-alpha-D-glucosamine 1-phosphate + UTP + H(+) = UDP-N-acetyl-alpha-D-glucosamine + diphosphate. Its pathway is nucleotide-sugar biosynthesis; UDP-N-acetyl-alpha-D-glucosamine biosynthesis; N-acetyl-alpha-D-glucosamine 1-phosphate from alpha-D-glucosamine 6-phosphate (route II): step 2/2. The protein operates within nucleotide-sugar biosynthesis; UDP-N-acetyl-alpha-D-glucosamine biosynthesis; UDP-N-acetyl-alpha-D-glucosamine from N-acetyl-alpha-D-glucosamine 1-phosphate: step 1/1. It participates in bacterial outer membrane biogenesis; LPS lipid A biosynthesis. Its function is as follows. Catalyzes the last two sequential reactions in the de novo biosynthetic pathway for UDP-N-acetylglucosamine (UDP-GlcNAc). The C-terminal domain catalyzes the transfer of acetyl group from acetyl coenzyme A to glucosamine-1-phosphate (GlcN-1-P) to produce N-acetylglucosamine-1-phosphate (GlcNAc-1-P), which is converted into UDP-GlcNAc by the transfer of uridine 5-monophosphate (from uridine 5-triphosphate), a reaction catalyzed by the N-terminal domain. The chain is Bifunctional protein GlmU from Stutzerimonas stutzeri (strain A1501) (Pseudomonas stutzeri).